Here is a 422-residue protein sequence, read N- to C-terminus: Glyceraldehyde-3-phosphate dehydrogenase GAPCP1, chloroplastic (422 aa).

Residues 1 to 69 (MAFSSLLRSA…NARSVQPIKA (69 aa)) constitute a chloroplast transit peptide. The segment covering 50–63 (SGISSSLQNGNARS) has biased composition (polar residues). Positions 50 to 84 (SGISSSLQNGNARSVQPIKATATEVPSAVRRSSSS) are disordered. Thr70 carries the post-translational modification N-acetylthreonine. NAD(+)-binding positions include 96–97 (RI), Asp118, and Arg164. D-glyceraldehyde 3-phosphate is bound by residues 235-237 (SCT), Thr266, 295-296 (TG), and Arg318. Cys236 acts as the Nucleophile in catalysis. Asn400 serves as a coordination point for NAD(+).

It belongs to the glyceraldehyde-3-phosphate dehydrogenase family. In terms of assembly, homotetramer. As to expression, expressed in shoot and root vasculature, leaf veins and vascular tissue of flowers and siliques.

The protein localises to the plastid. It localises to the chloroplast stroma. It carries out the reaction D-glyceraldehyde 3-phosphate + phosphate + NAD(+) = (2R)-3-phospho-glyceroyl phosphate + NADH + H(+). Its function is as follows. Involved in plastidial glycolytic pathway and plays a specific role in glycolytic energy production in non-green plastids and chloroplasts. Essential for breakdown of starch to form sucrose for export to non-photosynthetic tissues, and to generate primary metabolites for anabolic pathways such as fatty acid and amino acid synthesis. Plays an important role in plant development by providing substrates for the phosphorylated pathway of serine biosynthesis in roots. Plays a crucial role in pollen development. Functionally redundant with GAPCP2. The polypeptide is Glyceraldehyde-3-phosphate dehydrogenase GAPCP1, chloroplastic (GAPCP1) (Arabidopsis thaliana (Mouse-ear cress)).